The chain runs to 157 residues: Protein Smg homolog (157 aa).

Belongs to the Smg family.

The polypeptide is Protein Smg homolog (Shewanella sediminis (strain HAW-EB3)).